The primary structure comprises 337 residues: MHSRKSKSITGKRKQVGSNVTRVIKPQKTRRIIRRFHHLINKRQSICKFLCLKENLDDSNEEKNDKIIRLSIKGNVRLGKYYEDGKSQSFNDAMESQLLRLHSLIKNESKSKDTSDLAVMYTLLGYIMNQINKLGGLETYQIASQNGQLKERGGDTSKLLEKWIRSSFENCPGAVALEIGSLSSGNRISRCALFRNVVRIDLEEHEGVIKQDFMERPLPRNENDKFDLISCSLVLNFVKNHRDRGAMCHRMVKFLKPQGYIFIVLPQACVTHSRYCDKTLLQNLLGSIGLIMLNSHQSNKLYYCLYQLQVVPPQPSSFSKRIKVNDGPGLNNFGITL.

Glycine 180 and aspartate 201 together coordinate S-adenosyl-L-methionine.

It belongs to the BMT2 family.

It is found in the nucleus. It localises to the nucleolus. The enzyme catalyses adenosine(2142) in 25S rRNA + S-adenosyl-L-methionine = N(1)-methyladenosine(2142) in 25S rRNA + S-adenosyl-L-homocysteine + H(+). In terms of biological role, S-adenosyl-L-methionine-dependent methyltransferase that specifically methylates the N(1) position of adenine 2142 in 25S rRNA. N(1)-methyladenine(2142) in 25S rRNA is present in helix 65, a region that accounts for most of the intersubunit surface of the large subunit. This is 25S rRNA (adenine(2142)-N(1))-methyltransferase from Saccharomyces cerevisiae (strain ATCC 204508 / S288c) (Baker's yeast).